Consider the following 409-residue polypeptide: Elongation factor Tu (409 aa).

The 205-residue stretch at 10 to 214 (KPHVNIGTIG…AVDSYIPDPE (205 aa)) folds into the tr-type G domain. Residues 19 to 26 (GHVDHGKT) are G1. 19–26 (GHVDHGKT) contributes to the GTP binding site. Threonine 26 contacts Mg(2+). Residues 60–64 (GITIN) are G2. The tract at residues 81–84 (DCPG) is G3. Residues 81-85 (DCPGH) and 136-139 (NKED) contribute to the GTP site. Residues 136-139 (NKED) are G4. Residues 174–176 (SGL) are G5.

In terms of assembly, monomer.

The protein resides in the cytoplasm. It catalyses the reaction GTP + H2O = GDP + phosphate + H(+). Functionally, GTP hydrolase that promotes the GTP-dependent binding of aminoacyl-tRNA to the A-site of ribosomes during protein biosynthesis. The sequence is that of Elongation factor Tu from Nostoc sp. (strain PCC 7120 / SAG 25.82 / UTEX 2576).